Reading from the N-terminus, the 447-residue chain is MTMTPREIVAELDKFIIGQNDAKRAVAIALRNRWRRMQLGEELRREIFPKNILMIGPTGVGKTEIARRLSDLAGAPFLKIEATKFTEVGYVGRDVESIIRDLVDVAVKMTREKAIRQVKSLAEEAAEERVLDALIPPARGGFQGEPTAEEKPTEKKESATRQLFRKKLRNGGLDDKEIEVEVSAHPSFEIMGPPGMEEMVSQLQGIMSSMSSRRSKSRRLKVKDALRILGEEEAAKLVDEDQIKSTALASVEQNGIVFIDEIDKIVKRDGAVGADVSREGVQRDLLPLVEGSTVFTKYGMVKTDHILFIASGAFHIAKPSDLVPELQGRFPIRVELKALTADDFVRILTEPKASLTEQYTELLKTENFGLSFTKDGIKRLAEIAYQVNDRSENIGARRLHTIMERLLEEVSFEATDKQGESITIDADYVNKQLKKLAEDEDLSRYIL.

ATP contacts are provided by residues Ile-17 and 59–64; that span reads GVGKTE. The segment at 136 to 160 is disordered; sequence PPARGGFQGEPTAEEKPTEKKESAT. Residues 148-159 show a composition bias toward basic and acidic residues; that stretch reads AEEKPTEKKESA. Asp-260, Glu-325, and Arg-397 together coordinate ATP.

It belongs to the ClpX chaperone family. HslU subfamily. A double ring-shaped homohexamer of HslV is capped on each side by a ring-shaped HslU homohexamer. The assembly of the HslU/HslV complex is dependent on binding of ATP.

The protein localises to the cytoplasm. ATPase subunit of a proteasome-like degradation complex; this subunit has chaperone activity. The binding of ATP and its subsequent hydrolysis by HslU are essential for unfolding of protein substrates subsequently hydrolyzed by HslV. HslU recognizes the N-terminal part of its protein substrates and unfolds these before they are guided to HslV for hydrolysis. This chain is ATP-dependent protease ATPase subunit HslU, found in Coxiella burnetii (strain Dugway 5J108-111).